The chain runs to 503 residues: Alpha-1,3/1,6-mannosyltransferase ALG2 (503 aa).

N-linked (GlcNAc...) asparagine glycosylation is found at asparagine 59, asparagine 173, asparagine 262, and asparagine 403. 2 consecutive transmembrane segments (helical) span residues 444 to 466 and 473 to 495; these read LWST…LITG and LLLA…WIIV. N-linked (GlcNAc...) asparagine glycosylation is present at asparagine 500.

This sequence belongs to the glycosyltransferase group 1 family.

It localises to the endoplasmic reticulum membrane. It carries out the reaction a beta-D-Man-(1-&gt;4)-beta-D-GlcNAc-(1-&gt;4)-alpha-D-GlcNAc-diphospho-di-trans,poly-cis-dolichol + GDP-alpha-D-mannose = an alpha-D-Man-(1-&gt;3)-beta-D-Man-(1-&gt;4)-beta-D-GlcNAc-(1-&gt;4)-alpha-D-GlcNAc-diphospho-di-trans,poly-cis-dolichol + GDP + H(+). The catalysed reaction is an alpha-D-Man-(1-&gt;3)-beta-D-Man-(1-&gt;4)-beta-D-GlcNAc-(1-&gt;4)-alpha-D-GlcNAc-diphospho-di-trans,poly-cis-dolichol + GDP-alpha-D-mannose = an alpha-D-Man-(1-&gt;3)-[alpha-D-Man-(1-&gt;6)]-beta-D-Man-(1-&gt;4)-beta-D-GlcNAc-(1-&gt;4)-alpha-D-GlcNAc-diphospho-di-trans,poly-cis-dolichol + GDP + H(+). It participates in protein modification; protein glycosylation. Mannosylates Man(2)GlcNAc(2)-dolichol diphosphate and Man(1)GlcNAc(2)-dolichol diphosphate to form Man(3)GlcNAc(2)-dolichol diphosphate. The protein is Alpha-1,3/1,6-mannosyltransferase ALG2 (ALG2) of Kluyveromyces lactis (strain ATCC 8585 / CBS 2359 / DSM 70799 / NBRC 1267 / NRRL Y-1140 / WM37) (Yeast).